The chain runs to 192 residues: Nucleoside triphosphate pyrophosphatase (192 aa).

The active-site Proton acceptor is the aspartate 73.

The protein belongs to the Maf family. It depends on a divalent metal cation as a cofactor.

The protein resides in the cytoplasm. The enzyme catalyses a ribonucleoside 5'-triphosphate + H2O = a ribonucleoside 5'-phosphate + diphosphate + H(+). It carries out the reaction a 2'-deoxyribonucleoside 5'-triphosphate + H2O = a 2'-deoxyribonucleoside 5'-phosphate + diphosphate + H(+). In terms of biological role, nucleoside triphosphate pyrophosphatase. May have a dual role in cell division arrest and in preventing the incorporation of modified nucleotides into cellular nucleic acids. This chain is Nucleoside triphosphate pyrophosphatase, found in Ehrlichia ruminantium (strain Gardel).